Reading from the N-terminus, the 317-residue chain is Porphobilinogen deaminase (317 aa).

Cysteine 242 is subject to S-(dipyrrolylmethanemethyl)cysteine.

The protein belongs to the HMBS family. Monomer. Dipyrromethane serves as cofactor.

It carries out the reaction 4 porphobilinogen + H2O = hydroxymethylbilane + 4 NH4(+). It participates in porphyrin-containing compound metabolism; protoporphyrin-IX biosynthesis; coproporphyrinogen-III from 5-aminolevulinate: step 2/4. Its function is as follows. Tetrapolymerization of the monopyrrole PBG into the hydroxymethylbilane pre-uroporphyrinogen in several discrete steps. The polypeptide is Porphobilinogen deaminase (Colwellia psychrerythraea (strain 34H / ATCC BAA-681) (Vibrio psychroerythus)).